A 327-amino-acid polypeptide reads, in one-letter code: GMP reductase (327 aa).

Cys176 acts as the Thioimidate intermediate in catalysis. 205-228 (IIADGGIRTHGDIAKSIRFGASMV) provides a ligand contact to NADP(+).

The protein belongs to the IMPDH/GMPR family. GuaC type 2 subfamily.

It catalyses the reaction IMP + NH4(+) + NADP(+) = GMP + NADPH + 2 H(+). In terms of biological role, catalyzes the irreversible NADPH-dependent deamination of GMP to IMP. It functions in the conversion of nucleobase, nucleoside and nucleotide derivatives of G to A nucleotides, and in maintaining the intracellular balance of A and G nucleotides. In Streptococcus agalactiae serotype Ia (strain ATCC 27591 / A909 / CDC SS700), this protein is GMP reductase.